A 53-amino-acid chain; its full sequence is UPF0391 membrane protein KPK_4780 (53 aa).

A run of 2 helical transmembrane segments spans residues Trp-4–Ala-24 and Ala-30–Phe-47.

This sequence belongs to the UPF0391 family.

It localises to the cell membrane. The polypeptide is UPF0391 membrane protein KPK_4780 (Klebsiella pneumoniae (strain 342)).